The following is a 196-amino-acid chain: Phosphoheptose isomerase (196 aa).

The 160-residue stretch at 35–194 (LTACLRCGGK…EKELFTPSGQ (160 aa)) folds into the SIS domain. 50-52 (NGG) is a substrate binding site. Residues histidine 59 and glutamate 63 each contribute to the Zn(2+) site. Substrate-binding positions include glutamate 63, 92–93 (ND), 118–120 (STS), serine 123, and glutamine 170. Zn(2+) is bound by residues glutamine 170 and histidine 178.

Belongs to the SIS family. GmhA subfamily. Homotetramer. Zn(2+) serves as cofactor.

The protein resides in the cytoplasm. It catalyses the reaction 2 D-sedoheptulose 7-phosphate = D-glycero-alpha-D-manno-heptose 7-phosphate + D-glycero-beta-D-manno-heptose 7-phosphate. It participates in carbohydrate biosynthesis; D-glycero-D-manno-heptose 7-phosphate biosynthesis; D-glycero-alpha-D-manno-heptose 7-phosphate and D-glycero-beta-D-manno-heptose 7-phosphate from sedoheptulose 7-phosphate: step 1/1. Functionally, catalyzes the isomerization of sedoheptulose 7-phosphate in D-glycero-D-manno-heptose 7-phosphate. The chain is Phosphoheptose isomerase from Syntrophotalea carbinolica (strain DSM 2380 / NBRC 103641 / GraBd1) (Pelobacter carbinolicus).